The primary structure comprises 85 residues: Large ribosomal subunit protein bL27 (85 aa).

A disordered region spans residues 1–24 (MAHKKGVGSSRNGRDSDGQRLGCK).

Belongs to the bacterial ribosomal protein bL27 family.

The protein is Large ribosomal subunit protein bL27 of Geotalea daltonii (strain DSM 22248 / JCM 15807 / FRC-32) (Geobacter daltonii).